Reading from the N-terminus, the 183-residue chain is MKNNSIRTVVATGIGAALFIIICIFVNIPIFGNTSIQLQYAVQVLFSVIFGSRSIIGFFMGFIGQVLKDGIQYGDISWAWVLASGITGLVIGLFGKKYDVTMGKFSVMSMIWFNLAQALGLLIAYGVVTPIGDKIQFAQAWSYLYAQSFVAGVANFITIAIGGTLLLAIYASSRTQSGSLTKG.

A run of 5 helical transmembrane segments spans residues 11-31 (ATGI…IPIF), 44-64 (VLFS…GFIG), 74-94 (GDIS…IGLF), 111-131 (IWFN…VTPI), and 149-169 (FVAG…LLAI).

It belongs to the UPF0397 family.

The protein resides in the cell membrane. The sequence is that of UPF0397 protein stu0306/stu0307 from Streptococcus thermophilus (strain ATCC BAA-250 / LMG 18311).